Reading from the N-terminus, the 1938-residue chain is Myosin heavy chain, striated muscle (1938 aa).

The region spanning 29–79 (DGKKNCWVPDEKEGFASAEIQSSKGDEITVKIVADSSTRTVKKDDIQSMNP) is the Myosin N-terminal SH3-like domain. The region spanning 83–775 (EKLEDMANMT…VLGNLEEMRD (693 aa)) is the Myosin motor domain. An ATP-binding site is contributed by 176 to 183 (GESGAGKT). Residues 653-675 (LNKLMKNLYSTHPHFVRCIIPNE) form an actin-binding region. The IQ domain occupies 778–805 (LSKIISMFQAHIRGYLIRKAYKKLQDQR). Residues 836–1938 (LLSIARQEEE…RSSVSVSASN (1103 aa)) form a rodlike tail (S2 and LMM domains) region. Residues 836 to 1938 (LLSIARQEEE…RSSVSVSASN (1103 aa)) adopt a coiled-coil conformation. Composition is skewed to basic and acidic residues over residues 1041 to 1058 (VRGDVEKAKRKVEQDLKS) and 1212 to 1225 (SKLEKDKKDLKREM). Disordered stretches follow at residues 1041–1062 (VRGDVEKAKRKVEQDLKSTQEN), 1187–1332 (SALR…EVRN), 1344–1363 (LEEEQESKSDVQRQLSKANN), and 1898–1938 (HELE…SASN). Positions 1265-1285 (RSINELQSQKSRLQAENSDLT) are enriched in polar residues. 3 stretches are compositionally biased toward basic and acidic residues: residues 1286–1303 (RQLEDAEHRVSVLSKEKS), 1310–1332 (EDARRSLEEETRARSKLQNEVRN), and 1344–1354 (LEEEQESKSDV). Over residues 1922–1938 (RSSVSVQRSSVSVSASN) the composition is skewed to low complexity.

It belongs to the TRAFAC class myosin-kinesin ATPase superfamily. Myosin family. As to quaternary structure, muscle myosin is a hexameric protein that consists of 2 heavy chain subunits (MHC), 2 alkali light chain subunits (MLC) and 2 regulatory light chain subunits (MLC-2).

It is found in the cytoplasm. It localises to the myofibril. Its function is as follows. Muscle contraction. In terms of biological role, myosin is a protein that binds to F-actin and has ATPase activity that is activated by F-actin. This is Myosin heavy chain, striated muscle from Argopecten irradians (Bay scallop).